The following is a 423-amino-acid chain: Serine hydroxymethyltransferase (423 aa).

Residues L118 and 122–124 (GHL) each bind (6S)-5,6,7,8-tetrahydrofolate. K227 bears the N6-(pyridoxal phosphate)lysine mark. A (6S)-5,6,7,8-tetrahydrofolate-binding site is contributed by 351 to 353 (SPF).

The protein belongs to the SHMT family. As to quaternary structure, homodimer. It depends on pyridoxal 5'-phosphate as a cofactor.

The protein resides in the cytoplasm. It carries out the reaction (6R)-5,10-methylene-5,6,7,8-tetrahydrofolate + glycine + H2O = (6S)-5,6,7,8-tetrahydrofolate + L-serine. Its pathway is one-carbon metabolism; tetrahydrofolate interconversion. The protein operates within amino-acid biosynthesis; glycine biosynthesis; glycine from L-serine: step 1/1. Its function is as follows. Catalyzes the reversible interconversion of serine and glycine with tetrahydrofolate (THF) serving as the one-carbon carrier. This reaction serves as the major source of one-carbon groups required for the biosynthesis of purines, thymidylate, methionine, and other important biomolecules. Also exhibits THF-independent aldolase activity toward beta-hydroxyamino acids, producing glycine and aldehydes, via a retro-aldol mechanism. The protein is Serine hydroxymethyltransferase of Petrotoga mobilis (strain DSM 10674 / SJ95).